A 77-amino-acid chain; its full sequence is Dermaseptin-B9 (77 aa).

An N-terminal signal peptide occupies residues 1–22; the sequence is MAFLKKSLFLVLFLGLVSLSVC. Propeptides lie at residues 23 to 43 and 76 to 77; these read EEEK…QSEE and EQ.

It belongs to the frog skin active peptide (FSAP) family. Dermaseptin subfamily. As to expression, expressed by the skin glands.

It is found in the secreted. Functionally, has antimicrobial activity. Exhibits a bactericidal activity towards several species of mollicutes, firmicutes and gracilicutes. This peptide is membranotropic and it efficiently depolarizes the plasma membrane. This Phyllomedusa bicolor (Two-colored leaf frog) protein is Dermaseptin-B9 (DRG3).